The primary structure comprises 270 residues: tRNA pseudouridine synthase A (270 aa).

Residue Asp-60 is the Nucleophile of the active site. The RNA binding stretch occupies residues 107–111 (FHARF). Tyr-118 provides a ligand contact to substrate. Residues 168-172 (QCQSR) are interaction with tRNA.

This sequence belongs to the tRNA pseudouridine synthase TruA family. In terms of assembly, homodimer.

The catalysed reaction is uridine(38/39/40) in tRNA = pseudouridine(38/39/40) in tRNA. Formation of pseudouridine at positions 38, 39 and 40 in the anticodon stem and loop of transfer RNAs. In Escherichia fergusonii (strain ATCC 35469 / DSM 13698 / CCUG 18766 / IAM 14443 / JCM 21226 / LMG 7866 / NBRC 102419 / NCTC 12128 / CDC 0568-73), this protein is tRNA pseudouridine synthase A.